A 267-amino-acid chain; its full sequence is 2-oxo-hept-4-ene-1,7-dioate hydratase (267 aa).

Residues Glu106, Glu108, and Glu139 each coordinate Mg(2+).

The protein belongs to the hydratase/decarboxylase family. Homodecamer. The cofactor is Mg(2+).

It catalyses the reaction (4Z)-2-oxohept-4-enedioate + H2O = (4S)-4-hydroxy-2-oxoheptanedioate. It functions in the pathway aromatic compound metabolism; 4-hydroxyphenylacetate degradation; pyruvate and succinate semialdehyde from 4-hydroxyphenylacetate: step 6/7. Transforms 2-oxo-hept-4-ene-1,7-dioate (OHED) into 4-hydroxy-2-oxoheptanedioate, a step in the 4-hydroxyphenylacetic acid (4-HPA) degradation pathway. The protein is 2-oxo-hept-4-ene-1,7-dioate hydratase of Escherichia coli.